The sequence spans 887 residues: Alanine--tRNA ligase (887 aa).

4 residues coordinate Zn(2+): His-565, His-569, Cys-674, and His-678.

Belongs to the class-II aminoacyl-tRNA synthetase family. Zn(2+) is required as a cofactor.

Its subcellular location is the cytoplasm. It carries out the reaction tRNA(Ala) + L-alanine + ATP = L-alanyl-tRNA(Ala) + AMP + diphosphate. In terms of biological role, catalyzes the attachment of alanine to tRNA(Ala) in a two-step reaction: alanine is first activated by ATP to form Ala-AMP and then transferred to the acceptor end of tRNA(Ala). Also edits incorrectly charged Ser-tRNA(Ala) and Gly-tRNA(Ala) via its editing domain. This Erythrobacter litoralis (strain HTCC2594) protein is Alanine--tRNA ligase.